A 709-amino-acid chain; its full sequence is Elongation factor G (709 aa).

The region spanning Ala-8 to Leu-297 is the tr-type G domain. GTP contacts are provided by residues Ala-17–Thr-24, Asp-81–His-85, and Asn-135–Asp-138.

The protein belongs to the TRAFAC class translation factor GTPase superfamily. Classic translation factor GTPase family. EF-G/EF-2 subfamily.

It is found in the cytoplasm. Catalyzes the GTP-dependent ribosomal translocation step during translation elongation. During this step, the ribosome changes from the pre-translocational (PRE) to the post-translocational (POST) state as the newly formed A-site-bound peptidyl-tRNA and P-site-bound deacylated tRNA move to the P and E sites, respectively. Catalyzes the coordinated movement of the two tRNA molecules, the mRNA and conformational changes in the ribosome. This Lactococcus lactis subsp. cremoris (strain MG1363) protein is Elongation factor G.